A 953-amino-acid chain; its full sequence is uncharacterized protein (953 aa).

Helical transmembrane passes span 23-43 (VVTS…AFLI), 103-123 (YLFI…PILL), 148-168 (GRYF…LYII), 392-412 (VSAI…VGMI), 435-455 (LLGL…MSFL), 481-501 (AYFA…SAAT), 540-560 (ISSG…LGAF), 575-595 (LSSM…VITF), 599-619 (IISP…YIAY), 642-662 (LFQT…LFAV), and 666-686 (WGPI…HLHL). The interval 910-953 (VPPPYNDVKDEANGEANGEFDTASKENNPFADPKYKEEESRSAV) is disordered. Basic and acidic residues predominate over residues 942-953 (PKYKEEESRSAV). Ser-949 is modified (phosphoserine).

The protein belongs to the CSC1 (TC 1.A.17) family.

It is found in the membrane. Functionally, acts as an osmosensitive calcium-permeable cation channel. This is an uncharacterized protein from Saccharomyces cerevisiae (strain ATCC 204508 / S288c) (Baker's yeast).